We begin with the raw amino-acid sequence, 244 residues long: Ferric aerobactin reductase IutB (244 aa).

The [2Fe-2S] cluster site is built by Cys220, Cys221, Cys232, and Cys235.

Monomer. The cofactor is [2Fe-2S] cluster.

It localises to the cytoplasm. The enzyme catalyses 2 a Fe(II)-siderophore + NAD(+) + H(+) = 2 a Fe(III)-siderophore + NADH. It catalyses the reaction 2 a Fe(II)-siderophore + NADP(+) + H(+) = 2 a Fe(III)-siderophore + NADPH. Ferric-siderophore reductase involved in iron removal from the siderophores after their transport into the cell. Acts as a major ferric-aerobactin reductase catalyzing the reduction of Fe(3+)-aerobactin, a citrate-hydroxamate siderophore produced by other bacteria. Catalyzes reduction of Fe(3+)-vulnibactin, a catecholate siderophore synthesized by V.vulnificus, in the absence of VuuB. Catalyzes reduction of ferrioxamine B and Fe(3+)-vibriobactin in vitro. No activity with Fe(3+)-enterobactin. Catalyzes reduction of ferric chelating compound Fe(3+)-nitrilotriacetic acid (NTA) in the presence of NADH, NADPH or reduced glutathione (GSH) as its electron donor in vitro. Also catalyzes reduction of ferric chelating compounds Fe(3+)-citrate and Fe(3+)-EDTA as well as non-complexed FeCl3 in the presence of GSH as its electron donor in vitro. Highest activity with Fe(3+)-NTA as electron acceptor and GSH as donor. The protein is Ferric aerobactin reductase IutB of Vibrio vulnificus.